Consider the following 427-residue polypeptide: Endothelin-1 receptor (427 aa).

The first 20 residues, 1–20 (METLCLRASFWLALVGCVIS), serve as a signal peptide directing secretion. Over 21–80 (DNPERYSTNLSNHVDDFTTFRGTELSFLVTTHQPTNLVLPSNGSMHNYCPQQTKITSAFK) the chain is Extracellular. Asparagine 29 and asparagine 62 each carry an N-linked (GlcNAc...) asparagine glycan. A helical membrane pass occupies residues 81–102 (YINTVISCTIFIVGMVGNATLL). Over 103 to 112 (RIIYQNKCMR) the chain is Cytoplasmic. Residues 113-132 (NGPNALIASLALGDLIYVVI) form a helical membrane-spanning segment. Residues 133-159 (DLPINVFKLLAGRWPFDHNDFGVFLCK) lie on the Extracellular side of the membrane. Cysteine 158 and cysteine 239 form a disulfide bridge. Residues 160–181 (LFPFLQKSSVGITVLNLCALSV) traverse the membrane as a helical segment. Residues 182–205 (DRYRAVASWSRVQGIGIPLVTAIE) are Cytoplasmic-facing. Residues 206-229 (IVSIWILSFILAIPEAIGFVMVPF) traverse the membrane as a helical segment. The Extracellular segment spans residues 230–256 (EYRGEQHKTCMLNATSKFMEFYQDVKD). Residues 257 to 278 (WWLFGFYFCMPLVCTAIFYTLM) form a helical membrane-spanning segment. At 279–306 (TCEMLNRRNGSLRIALSEHLKQRREVAK) the chain is on the cytoplasmic side. Residues 307 to 328 (TVFCLVVIFALCWFPLHLSRIL) form a helical membrane-spanning segment. The Extracellular segment spans residues 329–347 (KKTVYNEMDKNRCELLSFL). Residues 348–372 (LLMDYIGINLATMNSCINPIALYFV) traverse the membrane as a helical segment. The Cytoplasmic segment spans residues 373 to 427 (SKKFKNCFQSCLCCCCYQSKSLMTSVPMNGTSIQWKNHDQNNHNTDRSSHKDSMN). A disordered region spans residues 406 to 427 (QWKNHDQNNHNTDRSSHKDSMN). Residues 408 to 427 (KNHDQNNHNTDRSSHKDSMN) are compositionally biased toward basic and acidic residues. Phosphoserine is present on serine 425.

The protein belongs to the G-protein coupled receptor 1 family. Endothelin receptor subfamily. EDNRA sub-subfamily. Interacts with HDAC7 and KAT5. As to expression, isoform 1, isoform 3 and isoform 4 are expressed in a variety of tissues, with highest levels in the aorta and cerebellum, followed by lung, atrium and cerebral cortex, lower levels in the placenta, kidney, adrenal gland, duodenum, colon, ventricle and liver but no expression in umbilical vein endothelial cells. Within the placenta, isoform 1, isoform 2, isoform 3 and isoform 4 are expressed in the villi and stem villi vessels.

It localises to the cell membrane. Receptor for endothelin-1. Mediates its action by association with G proteins that activate a phosphatidylinositol-calcium second messenger system. The rank order of binding affinities for ET-A is: ET1 &gt; ET2 &gt;&gt; ET3. The protein is Endothelin-1 receptor of Homo sapiens (Human).